The primary structure comprises 190 residues: Protein GrpE (190 aa).

Residues 1–31 (MTETPNTSSEEIQTSEPSSDNELQTLQQENA) show a composition bias toward polar residues. Residues 1 to 34 (MTETPNTSSEEIQTSEPSSDNELQTLQQENANLK) are disordered.

The protein belongs to the GrpE family. As to quaternary structure, homodimer.

It is found in the cytoplasm. In terms of biological role, participates actively in the response to hyperosmotic and heat shock by preventing the aggregation of stress-denatured proteins, in association with DnaK and GrpE. It is the nucleotide exchange factor for DnaK and may function as a thermosensor. Unfolded proteins bind initially to DnaJ; upon interaction with the DnaJ-bound protein, DnaK hydrolyzes its bound ATP, resulting in the formation of a stable complex. GrpE releases ADP from DnaK; ATP binding to DnaK triggers the release of the substrate protein, thus completing the reaction cycle. Several rounds of ATP-dependent interactions between DnaJ, DnaK and GrpE are required for fully efficient folding. This is Protein GrpE from Chlamydia muridarum (strain MoPn / Nigg).